Consider the following 766-residue polypeptide: Protein zer-1 homolog (766 aa).

N-acetylalanine is present on Ala-2. LRR repeat units follow at residues 226–245 (SLVL…IVQL), 246–268 (HKLR…KLTR), and 278–302 (LGNL…KMEE). 5 ARM repeats span residues 427 to 467 (RSEQ…NFGI), 511 to 556 (DNDH…NITD), 558 to 600 (TPDN…NVAE), 602 to 643 (KELR…HIMF), and 714 to 756 (PDKY…HCSN).

The protein belongs to the zyg-11 family. As to quaternary structure, interacts with the ELOC-ELOB/Elongin BC complex. Part of an E3 ubiquitin ligase complex including ZER1, CUL2 and Elongin BC.

In terms of biological role, serves as substrate adapter subunit in the E3 ubiquitin ligase complex ZYG11B-CUL2-Elongin BC. Acts redudantly with ZYG11B to target substrates bearing N-terminal glycine degrons for proteasomal degradation. Involved in the clearance of proteolytic fragments generated by caspase cleavage during apoptosis since N-terminal glycine degrons are strongly enriched at caspase cleavage sites. Also important in the quality control of protein N-myristoylation in which N-terminal glycine degrons are conditionally exposed after a failure of N-myristoylation. This is Protein zer-1 homolog (ZER1) from Pongo abelii (Sumatran orangutan).